The following is a 68-amino-acid chain: Phage-like element PBSX protein XtrA (68 aa).

The protein to B.subtilis YqaO.

The chain is Phage-like element PBSX protein XtrA (xtrA) from Bacillus subtilis (strain 168).